Consider the following 385-residue polypeptide: UPF0284 protein P9301_04631 (385 aa).

The protein belongs to the UPF0284 family.

The protein is UPF0284 protein P9301_04631 of Prochlorococcus marinus (strain MIT 9301).